A 249-amino-acid chain; its full sequence is tRNA (guanine-N(1)-)-methyltransferase (249 aa).

S-adenosyl-L-methionine-binding positions include Gly113 and 133 to 138 (LGDFVL).

Belongs to the RNA methyltransferase TrmD family. In terms of assembly, homodimer.

It is found in the cytoplasm. The enzyme catalyses guanosine(37) in tRNA + S-adenosyl-L-methionine = N(1)-methylguanosine(37) in tRNA + S-adenosyl-L-homocysteine + H(+). Its function is as follows. Specifically methylates guanosine-37 in various tRNAs. This chain is tRNA (guanine-N(1)-)-methyltransferase, found in Leptothrix cholodnii (strain ATCC 51168 / LMG 8142 / SP-6) (Leptothrix discophora (strain SP-6)).